The sequence spans 360 residues: GDSL esterase/lipase At1g58430 (360 aa).

Residues 1–23 (MWTSKTISFTLFITTTLLGSCNA) form the signal peptide. N22 is a glycosylation site (N-linked (GlcNAc...) asparagine). S42 acts as the Nucleophile in catalysis. N-linked (GlcNAc...) asparagine glycosylation is found at N104 and N326. Catalysis depends on residues D334 and H337.

This sequence belongs to the 'GDSL' lipolytic enzyme family.

Its subcellular location is the secreted. This Arabidopsis thaliana (Mouse-ear cress) protein is GDSL esterase/lipase At1g58430.